The following is a 292-amino-acid chain: MSIIEAIILGLVQGLTEFLPISSSGHLRIVAAFSGWPDPGAAFTAVSQIGTELAVLIYFRKDVGNILATWFRSLGNKELRRHIDARMGWYVIIGSIPIGVAGLLFEEQISAPFRDLRLTALTLIVFGVLLGMVDRYSRKHRELTDLNAQRGLIYGLFQMLALIPGVSRSGATVTGGMLMGFKREAAARYAFLLAMPAVFASGLYKLKDIGGNEYAGVGATIVGTLVAFAVGYAVIAWFMRFISTNSFMPFVYYRIALGILILALVSFGVLTPESGAEFEGSAASVTAAEATH.

5 helical membrane passes run 87–107, 113–133, 190–210, 219–239, and 250–270; these read MGWYVIIGSIPIGVAGLLFEE, FRDLRLTALTLIVFGVLLGMV, AFLLAMPAVFASGLYKLKDIG, ATIVGTLVAFAVGYAVIAWFM, and FVYYRIALGILILALVSFGVL.

The protein belongs to the UppP family.

It localises to the cell membrane. It carries out the reaction di-trans,octa-cis-undecaprenyl diphosphate + H2O = di-trans,octa-cis-undecaprenyl phosphate + phosphate + H(+). Functionally, catalyzes the dephosphorylation of undecaprenyl diphosphate (UPP). Confers resistance to bacitracin. The sequence is that of Undecaprenyl-diphosphatase from Thermobifida fusca (strain YX).